Consider the following 124-residue polypeptide: Small ribosomal subunit protein uS12 (124 aa).

Residues 9–28 (KSERTVQKNQTKSPALDSCP) form a disordered region. Asp-89 is modified (3-methylthioaspartic acid).

It belongs to the universal ribosomal protein uS12 family. As to quaternary structure, part of the 30S ribosomal subunit. Contacts proteins S8 and S17. May interact with IF1 in the 30S initiation complex.

Functionally, with S4 and S5 plays an important role in translational accuracy. Its function is as follows. Interacts with and stabilizes bases of the 16S rRNA that are involved in tRNA selection in the A site and with the mRNA backbone. Located at the interface of the 30S and 50S subunits, it traverses the body of the 30S subunit contacting proteins on the other side and probably holding the rRNA structure together. The combined cluster of proteins S8, S12 and S17 appears to hold together the shoulder and platform of the 30S subunit. The chain is Small ribosomal subunit protein uS12 from Bdellovibrio bacteriovorus (strain ATCC 15356 / DSM 50701 / NCIMB 9529 / HD100).